We begin with the raw amino-acid sequence, 187 residues long: Inosine triphosphate pyrophosphatase (187 aa).

Residue 11–16 participates in ITP binding; sequence TSNKNK. E39 is a binding site for Mg(2+). Residues K51, 67–68, K84, 143–146, K164, and 169–170 each bind ITP; these read DT, FGWD, and HR.

The protein belongs to the HAM1 NTPase family. In terms of assembly, homodimer. Mg(2+) is required as a cofactor. The cofactor is Mn(2+).

Its subcellular location is the cytoplasm. The protein resides in the nucleus. The enzyme catalyses ITP + H2O = IMP + diphosphate + H(+). It carries out the reaction dITP + H2O = dIMP + diphosphate + H(+). It catalyses the reaction XTP + H2O = XMP + diphosphate + H(+). Functionally, pyrophosphatase that hydrolyzes non-canonical purine nucleotides such as inosine triphosphate (ITP), deoxyinosine triphosphate (dITP) or xanthosine 5'-triphosphate (XTP) to their respective monophosphate derivatives. The enzyme does not distinguish between the deoxy- and ribose forms. Probably excludes non-canonical purines from RNA and DNA precursor pools, thus preventing their incorporation into RNA and DNA and avoiding chromosomal lesions. The polypeptide is Inosine triphosphate pyrophosphatase (Aspergillus fumigatus (strain ATCC MYA-4609 / CBS 101355 / FGSC A1100 / Af293) (Neosartorya fumigata)).